The following is a 402-amino-acid chain: Deoxyguanosinetriphosphate triphosphohydrolase-like protein 2 (402 aa).

Residues 72-215 (RLTHSLEVAQ…MDLADEIAYA (144 aa)) form the HD domain.

It belongs to the dGTPase family. Type 2 subfamily.

In Vibrio cholerae serotype O1 (strain ATCC 39315 / El Tor Inaba N16961), this protein is Deoxyguanosinetriphosphate triphosphohydrolase-like protein 2.